A 383-amino-acid polypeptide reads, in one-letter code: MTHQLRKSHPLLKLVNHSLIDLPTPSNISTWWNFGSLLGLTLMIQILTGVFLMMHFSPSDTTAFSSVAYTSREVWFGWLIRSFHTNGASIFFMFIFLHIGRGLYYASYLHENTWNVGVIMLFLLMATAFMGYVLPWGQMSFWGAAVITNLLSAIPYIGDTIVPWIWGGPSVNNATLTRFTALHFLLPFIILALLITHLIFLHERGSFNPAGLSKNTDKIPFHPYYTMKDVLGAVLAASMLLTLALYLPALLGDPENFTPANPMATPSHIKPEWYFLFAYAILRSIPNKLGGVLAMFSSIFILLLIPFLHTTTQQPMSLRPLSQLLFWTLILNFLALTWIGGKPVNSPYILLGQITSLLYFITILILMPLLGALENKTTKPPFI.

4 helical membrane-spanning segments follow: residues 34 to 54 (FGSL…FLMM), 78 to 99 (WLIR…FLHI), 114 to 134 (WNVG…GYVL), and 179 to 199 (FTAL…THLI). His-84 and His-98 together coordinate heme b. Residues His-183 and His-197 each contribute to the heme b site. A ubiquinone is bound at residue His-202. 4 helical membrane passes run 227–247 (MKDV…ALYL), 289–309 (LGGV…PFLH), 321–341 (LSQL…WIGG), and 348–368 (YILL…ILMP).

Belongs to the cytochrome b family. The cytochrome bc1 complex contains 3 respiratory subunits (MT-CYB, CYC1 and UQCRFS1), 2 core proteins (UQCRC1 and UQCRC2) and probably 6 low-molecular weight proteins. Heme b serves as cofactor.

It is found in the mitochondrion inner membrane. Its function is as follows. Component of the ubiquinol-cytochrome c reductase complex (complex III or cytochrome b-c1 complex) that is part of the mitochondrial respiratory chain. The b-c1 complex mediates electron transfer from ubiquinol to cytochrome c. Contributes to the generation of a proton gradient across the mitochondrial membrane that is then used for ATP synthesis. This Caiman crocodilus (Spectacled caiman) protein is Cytochrome b (MT-CYB).